The chain runs to 141 residues: Large ribosomal subunit protein uL16c (141 aa).

Residues 1–17 (MLSPKRTKYRKPHRGNR) are compositionally biased toward basic residues. Residues 1 to 21 (MLSPKRTKYRKPHRGNRKGQA) are disordered.

Belongs to the universal ribosomal protein uL16 family. In terms of assembly, part of the 50S ribosomal subunit.

It is found in the plastid. It localises to the chloroplast. This Ostreococcus tauri protein is Large ribosomal subunit protein uL16c.